We begin with the raw amino-acid sequence, 215 residues long: Cytochrome b6 (215 aa).

Residues 32 to 52 (IFYCLGGITLTCFLVQVATGF) traverse the membrane as a helical segment. Residue Cys35 coordinates heme c. The heme b site is built by His86 and His100. The next 3 membrane-spanning stretches (helical) occupy residues 90–110 (ASMM…TGGF), 116–136 (LTWV…VTGY), and 186–206 (LHTF…FLMI). The heme b site is built by His187 and His202.

Belongs to the cytochrome b family. PetB subfamily. In terms of assembly, the 4 large subunits of the cytochrome b6-f complex are cytochrome b6, subunit IV (17 kDa polypeptide, PetD), cytochrome f and the Rieske protein, while the 4 small subunits are PetG, PetL, PetM and PetN. The complex functions as a dimer. Heme b is required as a cofactor. The cofactor is heme c.

It localises to the plastid. Its subcellular location is the chloroplast thylakoid membrane. Its function is as follows. Component of the cytochrome b6-f complex, which mediates electron transfer between photosystem II (PSII) and photosystem I (PSI), cyclic electron flow around PSI, and state transitions. The chain is Cytochrome b6 from Eucalyptus globulus subsp. globulus (Tasmanian blue gum).